We begin with the raw amino-acid sequence, 125 residues long: Aspercryptin biosynthesis cluster protein K (125 aa).

The interval 104 to 125 (QRAESVAGDSRPREHRQGAVGY) is disordered. Basic and acidic residues predominate over residues 113 to 125 (SRPREHRQGAVGY).

Its pathway is secondary metabolite biosynthesis. Part of the gene cluster that mediates the biosynthesis of aspercryptins, linear lipopeptides built from six amino acids including 2 highly unusual and nonproteogenic amino acids, 2-amino-octanoic acid (2aoa) and 2-amino-dodecanol (2adol). The core structure of aspercryptins is as follows: Ser/Ala-Thr-Ile/Val-2aoa-Asn-2adol. The first step of aspercryptin biosynthesis is the generation of the fatty acid precursors, octanoic and dodecanoic acids, by the FAS subunits atnF and atnM. The fatty acid precursors are likely transformed into the corresponding alpha-amino fatty acids in three steps. First, they are hydroxylated by the cytochrome P450 monooxygenase atnE, then oxidized to the corresponding alpha-keto acids by the NAD(P)-dependent oxidoreductase atnD, and finally converted to the alpha-amino fatty acids by the PLP-dependent aminotransferases atnH or atnJ. the alpha-amino fatty acids, 2-amino-octanoic and 2-amino-dodecanoic acids, are recognized, activated, and covalently tethered to the NRPS atnA by its fourth and sixth adenylation domains. The second module of atnA is the Thr module and contains an epimerase (E) domain responsible for the epimerization of Thr to D-allo-Thr. Additionally, despite atnA having only one epimerase domain, the first amino acid of aspercryptin A1 is D-Ser, suggesting that serine is either loaded directly as D-Ser on the first module or that the epimerase domain in the threonine module epimerizes both L-Ser and L-Thr. After condensation of the hexapeptide of aspercryptin, the C-terminal reductase (TE) domain might be involved in the reductive release and production of the aldehyde hexapeptide. Further reduction would generate aspercryptins. The variety of aspercryptins produced reflects the flexibility of the atnA NRPS, allowing incorporation of alanine instead of serine, valine for isoleucine, and a C10 fatty amino alcohol instead of the C12 version. AtnB seems to be involved in the selectivity for Ile versus Val by the third module. Moreover, type B, C and D aspercryptins have an additional N-terminal cichorine, acetyl and propionyl group respectively. This is Aspercryptin biosynthesis cluster protein K from Emericella nidulans (strain FGSC A4 / ATCC 38163 / CBS 112.46 / NRRL 194 / M139) (Aspergillus nidulans).